The chain runs to 348 residues: Oxygen-dependent coproporphyrinogen-III oxidase (348 aa).

Serine 104 serves as a coordination point for substrate. Residues histidine 108 and histidine 118 each contribute to the a divalent metal cation site. Histidine 118 functions as the Proton donor in the catalytic mechanism. 120-122 contributes to the substrate binding site; that stretch reads NYR. A divalent metal cation-binding residues include histidine 152 and histidine 182. The interval 272–307 is important for dimerization; the sequence is YAEFNLVWDRGTIFGLQTNGRTESILMSLPPLARWE.

This sequence belongs to the aerobic coproporphyrinogen-III oxidase family. As to quaternary structure, homodimer. A divalent metal cation serves as cofactor.

It is found in the cytoplasm. It catalyses the reaction coproporphyrinogen III + O2 + 2 H(+) = protoporphyrinogen IX + 2 CO2 + 2 H2O. Its pathway is porphyrin-containing compound metabolism; protoporphyrin-IX biosynthesis; protoporphyrinogen-IX from coproporphyrinogen-III (O2 route): step 1/1. Involved in the heme and chlorophyll biosynthesis. Catalyzes the aerobic oxidative decarboxylation of propionate groups of rings A and B of coproporphyrinogen-III to yield the vinyl groups in protoporphyrinogen-IX. This is Oxygen-dependent coproporphyrinogen-III oxidase from Prochlorococcus marinus (strain NATL2A).